A 489-amino-acid chain; its full sequence is NAC domain-containing protein 74 (489 aa).

Positions 9 to 159 (LPPGFGFHPK…AYVLCRITKR (151 aa)) constitute an NAC domain. A DNA-binding region spans residues 108–165 (IGTKKTLVFHEGRPPTGRRTEWIMHEYYIDERECQACPDMKDAYVLCRITKRNDWIPG). A compositionally biased stretch (basic and acidic residues) spans 413–427 (KNQAHDVASTKRSDA). Residues 413 to 435 (KNQAHDVASTKRSDAGKPSTELS) form a disordered region. The chain crosses the membrane as a helical span at residues 456 to 476 (WNMILVAGFAIGVAVVALHIG).

In terms of tissue distribution, widely expressed.

The protein resides in the nucleus. Its subcellular location is the cell membrane. In terms of biological role, transcription activator involved in heat and endoplasmic reticulum (ER) stress responses. Regulates the expression of genes involved in ER protein folding and heat stress-responsive genes. Binds directly to the promoter of BZIP74 and regulates its expression in response to heat stress. This chain is NAC domain-containing protein 74, found in Oryza sativa subsp. japonica (Rice).